The sequence spans 465 residues: Citrate synthase-like protein (465 aa).

The tract at residues 13–40 (HISDMVDSTKMNGNQSQDTAGRADTPVS) is disordered. The span at 21–31 (TKMNGNQSQDT) shows a compositional bias: polar residues. Residues H357 and D413 contribute to the active site.

It belongs to the citrate synthase family.

The protein operates within secondary metabolite biosynthesis. In terms of biological role, citrate synthase-like protein; part of the gene cluster that mediates the biosynthesis of squalestatin S1 (SQS1, also known as zaragozic acid A), a heavily oxidized fungal polyketide that offers potent cholesterol lowering activity by targeting squalene synthase (SS). SQS1 is composed of a 2,8-dioxobicyclic[3.2.1]octane-3,4,5-tricarboxyclic acid core that is connected to two lipophilic polyketide arms. These initial steps feature the priming of an unusual benzoic acid starter unit onto the highly reducing polyketide synthase pks2, followed by oxaloacetate extension and product release to generate a tricarboxylic acid containing product. The phenylalanine ammonia lyase (PAL) M7 and the acyl-CoA ligase M9 are involved in transforming phenylalanine into benzoyl-CoA. The citrate synthase-like protein R3 is involved in connecting the C-alpha-carbons of the hexaketide chain and oxaloacetate to afford the tricarboxylic acid unit. The potential hydrolytic enzymes, M8 and M10, are in close proximity to pks2 and may participate in product release. On the other side, the tetraketide arm is synthesized by a the squalestatin tetraketide synthase pks1 and enzymatically esterified to the core in the last biosynthetic step, by the acetyltransferase M4. The biosynthesis of the tetraketide must involve 3 rounds of chain extension. After the first and second rounds methyl-transfer occurs, and in all rounds of extension the ketoreductase and dehydratase are active. The enoyl reductase and C-MeT of pks1 are not active in the final round of extension. The acetyltransferase M4 appears to have a broad substrate selectivity for its acyl CoA substrate, allowing the in vitro synthesis of novel squalestatins. The biosynthesis of SQS1 requires several oxidative steps likely performed by oxidoreductases M1, R1 and R2. Finally, in support of the identification of the cluster as being responsible for SQS1 production, the cluster contains a gene encoding a putative squalene synthase (SS) R6, suggesting a likely mechanism for self-resistance. This is Citrate synthase-like protein from Phoma sp. (strain ATCC 20986 / MF5453).